The chain runs to 285 residues: Ribosomal RNA small subunit methyltransferase I (285 aa).

The protein belongs to the methyltransferase superfamily. RsmI family.

Its subcellular location is the cytoplasm. The enzyme catalyses cytidine(1402) in 16S rRNA + S-adenosyl-L-methionine = 2'-O-methylcytidine(1402) in 16S rRNA + S-adenosyl-L-homocysteine + H(+). Its function is as follows. Catalyzes the 2'-O-methylation of the ribose of cytidine 1402 (C1402) in 16S rRNA. The sequence is that of Ribosomal RNA small subunit methyltransferase I from Mycobacterium tuberculosis (strain CDC 1551 / Oshkosh).